Reading from the N-terminus, the 1589-residue chain is MTEKDKAPNPEDVIEMDDSFSPQFVQEVNRVKSQIKSLIENNTTLRFFKPLTSNLGDVTAILRISFNNMMSKMEEKEKQSLVKELIKLVHHVAEKNTQDKVFIAASYERVVDELLRYANQKEVISTTLCVEGLIMTSDFRMCSRIDQEKWKFIKECIPKIDYKGIRTIIRYILESQLRRLPYQLSPEKVNELRRVEDVLLKIVDRDLNLMPPLITLSEVMRGTPKQAHMFPRLTEKLANLSSHFRPIADLTHVCGRPFIYPIPFHPAFHPPTSYWEDFGMNAQSPYTQSHHMLPYRPQHKAASCLYTFYMILRQPLGKDSLNPTNRNKTKSHWEPLLSVMIVEAMAETEALPEGKQIPRYQWDNITNLVMYGMSHLLVNPKNFFHYLKGLINQCKYTRARDEVMWIVFQVVSSLHKMIKIEDAVQEIVDLYNELFDGEFSWHGASDHPARMARFLAAASTWMLLEKNKAHKQNTDTIKSHIKVIHEAALNFDPKNMGMLAVLANAFKSDTRIGAQIVPAMSEALNTPPDPSQPTFDLSYQRKAVNQFDAFPKEFLDALTSRAKRSLLGQILSVFRSFGTDKLPSPAAFETLARICQSEDYEMAVKDLESLASRSLHISTQERAADIATNNQAKDQCHFLFDFLAYRLPHVHSYGKYTSTTGSLLLYFTASVAPNTPQNHQVYRLLEQALLRRMYWRTFHESVINHSQLFGSSYKENSNNVMLRHLKNPKTFSTPVDQWQFPLNPEIFKMTIYAFMRALKITGQEIPLDGTMHPIHVAGYGWPEKSTTFFPKWALEEIKKTDVKKLAPNYAEILSTTDEAFRMNTLLTGGQYVIRYADDPNPITYHCMLAVIFKQLCSKPEQDLTSEYYQVMEKKSPKDIVVMGNYLVDFIIADVKNNQDCNEQTFKTIAKTAALMCFHFNIHRADRFLLSLIMHPSTDEDAQICIQIANEFLLTPKFQERIKWFYENDVPRKEKDPYEYIKAIVKYHDAFPEFEACQLVPKNDDTGTNVHMPTYYGCLIERLLPILDQYVYVALEQQGYKMSNALLQLVSMFYRYHPMPIHFMYSVLFVSHGKMAGPDAKSFVSAFASQIEECHLTEEFEKYNHQKSSCEELIMELLDRMAASLDFVLTPPTFVAKDWRTAEMSPGAQALYLACIELMASPHSPEKLVNAMINVMQMRPHLRPFNVFNLIALLLTALPSTYADALHEEFIGVFKNGETANLKFEEIVFDNYDSSLLLHLPNRARSINMIAQIYWTQCNMALLNPFANDQVPKLLEHVKTEKDLWYTLRLVMPIIRRFWDSWDFAKTMRALRERFGPLVIMKLIIEKLGSMAESGVEIVHEAPFCDLFYNCKYVFVGDFLRETAITEFAKLPEAMRERLKYYVSQNEPAPPETPEREKTPERKDQQKEQQEQQHQQHHQNPQLHHEAQHHPHHPHQQPSMPPPQLIPQHHLQHHQQQLHHQQQQQQHLSQMMPPPQQPLQHLPHHQMDMAPPTPAPMHHQQHQMAMHQQMYPGQMFHHPQGGHMGYGMQHHMQQPHPHHPQMQGQMPSQMQHMVRMHNMTPQQQQQYAYMMQQQQHHYMQQQQHQQHHHM.

The segment at 1381 to 1499 (YVSQNEPAPP…PPTPAPMHHQ (119 aa)) is disordered. The span at 1392-1410 (TPEREKTPERKDQQKEQQE) shows a compositional bias: basic and acidic residues. Over residues 1457 to 1470 (LHHQQQQQQHLSQM) the composition is skewed to low complexity.

The protein belongs to the Mediator complex subunit 23 family. Component of the Mediator complex.

It localises to the nucleus. Functionally, component of the Mediator complex, a coactivator involved in the regulated transcription of nearly all RNA polymerase II-dependent genes. Mediator functions as a bridge to convey information from gene-specific regulatory proteins to the basal RNA polymerase II transcription machinery. Mediator is recruited to promoters by direct interactions with regulatory proteins and serves as a scaffold for the assembly of a functional preinitiation complex with RNA polymerase II and the general transcription factors. In Caenorhabditis briggsae, this protein is Mediator of RNA polymerase II transcription subunit 23 (sur-2).